The chain runs to 2626 residues: Unconventional myosin-IXa (2626 aa).

The 99-residue stretch at asparagine 14–leucine 112 folds into the Ras-associating domain. A Myosin motor domain is found at lysine 146–histidine 1017. Residues isoleucine 175 to tyrosine 195 traverse the membrane as a helical segment. Residue glycine 239–threonine 246 participates in ATP binding. The residue at position 755 (serine 755) is a Phosphoserine. The segment at glutamine 908–serine 919 is actin-binding. 5 IQ domains span residues leucine 1021–leucine 1041, leucine 1043–alanine 1072, methionine 1075–isoleucine 1104, arginine 1116–leucine 1145, and glutamine 1139–lysine 1168. The segment at arginine 1022–lysine 1163 is neck or regulatory domain. A tail region spans residues glutamate 1164–lysine 2589. Residues arginine 1221–arginine 1240 show a composition bias toward basic and acidic residues. Residues arginine 1221–arginine 1276 are disordered. A Phosphoserine modification is found at serine 1243. Threonine 1245 is subject to Phosphothreonine. Serine 1259 carries the post-translational modification Phosphoserine. A coiled-coil region spans residues glutamine 1265–lysine 1292. Positions lysine 1266 to arginine 1276 are enriched in basic residues. Phosphoserine is present on residues serine 1300 and serine 1318. The span at proline 1360–leucine 1375 shows a compositional bias: polar residues. Positions proline 1360 to leucine 1397 are disordered. Positions serine 1376 to serine 1386 are enriched in low complexity. Residues threonine 1493–threonine 1540 adopt a coiled-coil conformation. 5 disordered regions span residues valine 1562 to aspartate 1602, serine 1618 to isoleucine 1673, glycine 1689 to arginine 1726, serine 1765 to threonine 1784, and glutamine 1872 to valine 1907. Composition is skewed to basic and acidic residues over residues threonine 1620–threonine 1632 and histidine 1659–serine 1669. Positions proline 1716–arginine 1726 are enriched in basic residues. The segment covering serine 1772 to threonine 1784 has biased composition (polar residues). A compositionally biased stretch (basic and acidic residues) spans cysteine 1887–proline 1899. Serine 2016 is subject to Phosphoserine. A Phorbol-ester/DAG-type zinc finger spans residues glycine 2067–cysteine 2116. The region spanning valine 2131 to tyrosine 2319 is the Rho-GAP domain. The disordered stretch occupies residues serine 2365–arginine 2385. Serine 2380 bears the Phosphoserine mark. A coiled-coil region spans residues threonine 2408–glutamate 2444. The segment at aspartate 2449–lysine 2527 is disordered. Low complexity predominate over residues serine 2504–serine 2522. At serine 2542 the chain carries Phosphoserine. Positions proline 2552–glutamine 2614 are disordered.

It belongs to the TRAFAC class myosin-kinesin ATPase superfamily. Myosin family. In terms of processing, phosphorylated by ALPK1 following monosodium urate monohydrate (MSU)-induced inflammation. Expressed at high levels in brain, followed by testis and spleen. Expressed at very low levels, in kidney. Detected abundantly in brain and testis and at lower levels in adrenal gland, kidney, lung and spleen (at protein level). In adrenal gland it is mostly found in the medulla but not in the cortex. In brain, it is found in the cerebellum and the CA2-CA3 regions of the hippocampus.

The protein resides in the membrane. It localises to the cytoplasm. It is found in the synapse. The protein localises to the cell projection. Its subcellular location is the growth cone. In terms of biological role, myosins are actin-based motor molecules with ATPase activity. Unconventional myosins serve in intracellular movements. Regulates Rho by stimulating it's GTPase activity in neurons. Required for the regulation of neurite branching and motor neuron axon guidance. The chain is Unconventional myosin-IXa (Myo9a) from Rattus norvegicus (Rat).